A 165-amino-acid chain; its full sequence is Putative 4-hydroxy-4-methyl-2-oxoglutarate aldolase (165 aa).

Substrate-binding positions include 80 to 83 (GGNL) and arginine 102. Aspartate 103 contacts a divalent metal cation.

It belongs to the class II aldolase/RraA-like family. Homotrimer. A divalent metal cation serves as cofactor.

The catalysed reaction is 4-hydroxy-4-methyl-2-oxoglutarate = 2 pyruvate. It catalyses the reaction oxaloacetate + H(+) = pyruvate + CO2. Catalyzes the aldol cleavage of 4-hydroxy-4-methyl-2-oxoglutarate (HMG) into 2 molecules of pyruvate. Also contains a secondary oxaloacetate (OAA) decarboxylase activity due to the common pyruvate enolate transition state formed following C-C bond cleavage in the retro-aldol and decarboxylation reactions. In Cupriavidus taiwanensis (strain DSM 17343 / BCRC 17206 / CCUG 44338 / CIP 107171 / LMG 19424 / R1) (Ralstonia taiwanensis (strain LMG 19424)), this protein is Putative 4-hydroxy-4-methyl-2-oxoglutarate aldolase.